The following is a 546-amino-acid chain: DNA replication factor Cdt1 (546 aa).

A compositionally biased stretch (basic and acidic residues) spans 1 to 11 (MEQRRVTDFFA). A PIP-box K+4 motif motif is present at residues 1–23 (MEQRRVTDFFARRRPGPPRIAPP). 2 disordered regions span residues 1 to 118 (MEQR…QDQD) and 143 to 165 (SAQD…PCGE). Over residues 28 to 45 (RTPSPARPALRAPASATS) the composition is skewed to low complexity. At threonine 29 the chain carries Phosphothreonine; by MAPK8. A Phosphoserine modification is found at serine 31. A Cyclin-binding motif motif is present at residues 68–70 (RRL). Serine 93 bears the Phosphoserine; by MAPK8 mark. The interval 150–190 (SCTPEAEGRPEEPCGEKAPAYQRFHALAQPGLPGLVLPYKY) is interaction with GMNN. Positions 155–164 (AEGRPEEPCG) are enriched in basic and acidic residues. Serine 318 carries the phosphoserine; by MAPK8 modification. A phosphoserine mark is found at serine 380 and serine 394. Residues 383–415 (ALRSAAPSSPGSPRPALPATPPATPPAASPSAL) are disordered. Positions 392 to 410 (PGSPRPALPATPPATPPAA) are enriched in pro residues. An interaction with LRWD1 region spans residues 451-546 (LERLPELARV…AHQTRAEEGL (96 aa)).

This sequence belongs to the Cdt1 family. Interacts with GMNN; the interaction inhibits binding of the MCM complex to origins of replication. Interacts with MCM6. Interacts with CDC6; are mutually dependent on one another for loading MCM complexes onto chromatin. Interacts with PCNA. Interacts with LRWD1 during G1 phase and during mitosis. Interacts with NDC80 subunit of the NDC80 complex; leading to kinetochore localization. Interacts with GRWD1; origin binding of GRWD1 is dependent on CDT1. Interacts with KAT7. Interacts with ubiquitin-binding protein FAF1; the interaction is likely to promote CDT1 degradation. In terms of processing, two independent E3 ubiquitin ligase complexes, SCF(SKP2) and the DCX(DTL) complex, mediated CDT1 degradation in S phase. Ubiquitinated by the DCX(DTL) complex, in response to DNA damage, leading to its degradation. Ubiquitination by the DCX(DTL) complex is necessary to ensure proper cell cycle regulation and is PCNA-dependent: interacts with PCNA via its PIP-box, while the presence of the containing the 'K+4' motif in the PIP box, recruit the DCX(DTL) complex, leading to its degradation. Phosphorylation at Thr-29 by CDK2 targets CDT1 for ubiquitination by SCF(SKP2) E3 ubiquitin ligase and subsequent degradation. The interaction with GMNN protects it against ubiquitination. Deubiquitinated by USP37. Ubiquitinated and degraded by the SCF(FBXO31) complex during the G2 phase to prevent re-replication. Post-translationally, phosphorylation by cyclin A-dependent kinases at Thr-29 targets CDT1 for ubiquitynation by SCF(SKP2) E3 ubiquitin ligase and subsequent degradation. Phosphorylated at Thr-29 by MAPK8/JNK1, which blocks replication licensing in response to stress. Binding to GMNN is not affected by phosphorylation.

The protein resides in the nucleus. It localises to the chromosome. It is found in the centromere. Its subcellular location is the kinetochore. Functionally, required for both DNA replication and mitosis. DNA replication licensing factor, required for pre-replication complex assembly. Cooperates with CDC6 and the origin recognition complex (ORC) during G1 phase of the cell cycle to promote the loading of the mini-chromosome maintenance (MCM) complex onto DNA to generate pre-replication complexes (pre-RC). Required also for mitosis by promoting stable kinetochore-microtubule attachments. Potential oncogene. This chain is DNA replication factor Cdt1, found in Homo sapiens (Human).